The sequence spans 324 residues: Lactonase drp35 (324 aa).

10 residues coordinate Ca(2+): Glu-47, Ser-109, Gly-111, Asp-129, Thr-132, Tyr-134, Asp-137, Asn-184, Asp-235, and Ser-236. Asp-235 (proton donor) is an active-site residue.

It belongs to the SMP-30/CGR1 family. Ca(2+) serves as cofactor.

The protein resides in the cytoplasm. Functionally, exhibits lactonase activity. Acts in cells with perturbed membrane integrity and is possibly related to the membrane homeostasis. The sequence is that of Lactonase drp35 (drp35) from Staphylococcus saprophyticus subsp. saprophyticus (strain ATCC 15305 / DSM 20229 / NCIMB 8711 / NCTC 7292 / S-41).